The following is a 187-amino-acid chain: NADPH-dependent 3-demethoxyubiquinone 3-hydroxylase, mitochondrial (187 aa).

The transit peptide at 1-8 (MFRVITRG) directs the protein to the mitochondrion. K21 lines the NADH pocket. Tandem repeats lie at residues 28–99 (AGEL…SALL) and 100–187 (GKEG…AEKI). The interval 28 to 187 (AGELGADRIY…KGAIAIAEKI (160 aa)) is 2 X approximate tandem repeats. Residues E30, E60, H63, E112, E148, and H151 each contribute to the Fe cation site. K186 contacts NADH.

Belongs to the COQ7 family. Component of a multi-subunit COQ enzyme complex. The cofactor is Fe cation.

It is found in the mitochondrion inner membrane. It localises to the mitochondrion. The protein localises to the nucleus. The catalysed reaction is a 5-methoxy-2-methyl-3-(all-trans-polyprenyl)benzoquinone + NADH + O2 = a 3-demethylubiquinone + NAD(+) + H2O. It participates in cofactor biosynthesis; ubiquinone biosynthesis. In terms of biological role, catalyzes the hydroxylation of the 5-methoxy-2-methyl-3-(all-trans-polyprenyl)benzoquinone at the C6 position and participates in the biosynthesis of ubiquinone. Catalyzes the reaction through a substrate-mediated reduction pathway, whereby NADH shuttles electrons to 5-methoxy-2-methyl-3-(all-trans-decaprenyl)benzoquinone, which then transfers the electrons to the two Fe(3+) centers. The binding of 5-methoxy-2-methyl-3-(all-trans-polyprenyl)benzoquinone (DMQn) mediates reduction of the diiron center by nicotinamide adenine dinucleotide (NADH) and initiates oxygen activation for subsequent DMQ hydroxylation. Also has a structural role in the COQ enzyme complex, stabilizing other COQ polypeptides. Involved in lifespan determination in a ubiquinone-independent manner. Plays a role in modulating mitochondrial stress responses, acting in the nucleus, perhaps via regulating gene expression, independent of its characterized mitochondrial function in ubiquinone biosynthesis. Plays a role in modulating polyribosome formation. This chain is NADPH-dependent 3-demethoxyubiquinone 3-hydroxylase, mitochondrial, found in Caenorhabditis elegans.